The sequence spans 522 residues: 56 kDa type-specific antigen (522 aa).

The N-terminal stretch at 1 to 22 (MKKIMLIASAMSALSLPFSASA) is a signal peptide. A helical membrane pass occupies residues 67–87 (LTTMLPFGGTLAAGMTIAPGF). The tract at residues 385–417 (AQEEGDDQSQVSCNDKKQQAVAEDSKAGSSKEG) is disordered. The segment covering 398-417 (NDKKQQAVAEDSKAGSSKEG) has biased composition (basic and acidic residues). Residues 470–490 (IGVVASGVLGVAINVADGVCV) traverse the membrane as a helical segment.

The protein resides in the cell membrane. In terms of biological role, may be an adherent factor for rickettsial adsorption to the host-cell surface and a determinant of virulence of individual rickettsial strain. It is the major outer membrane protein. This Orientia tsutsugamushi (Rickettsia tsutsugamushi) protein is 56 kDa type-specific antigen.